The primary structure comprises 580 residues: Adenine deaminase (580 aa).

This sequence belongs to the metallo-dependent hydrolases superfamily. Adenine deaminase family. Requires Mn(2+) as cofactor.

It catalyses the reaction adenine + H2O + H(+) = hypoxanthine + NH4(+). This chain is Adenine deaminase, found in Listeria monocytogenes serovar 1/2a (strain ATCC BAA-679 / EGD-e).